The sequence spans 473 residues: 3-isopropylmalate dehydratase large subunit (473 aa).

[4Fe-4S] cluster contacts are provided by Cys-349, Cys-409, and Cys-412.

It belongs to the aconitase/IPM isomerase family. LeuC type 1 subfamily. Heterodimer of LeuC and LeuD. The cofactor is [4Fe-4S] cluster.

The enzyme catalyses (2R,3S)-3-isopropylmalate = (2S)-2-isopropylmalate. It participates in amino-acid biosynthesis; L-leucine biosynthesis; L-leucine from 3-methyl-2-oxobutanoate: step 2/4. Catalyzes the isomerization between 2-isopropylmalate and 3-isopropylmalate, via the formation of 2-isopropylmaleate. In Gloeobacter violaceus (strain ATCC 29082 / PCC 7421), this protein is 3-isopropylmalate dehydratase large subunit.